Here is a 308-residue protein sequence, read N- to C-terminus: D-alanine--D-alanine ligase (308 aa).

The region spanning Lys105 to Asp302 is the ATP-grasp domain. Asp133–Asp188 is a binding site for ATP. The Mg(2+) site is built by Asp256, Glu269, and Asn271.

This sequence belongs to the D-alanine--D-alanine ligase family. The cofactor is Mg(2+). Mn(2+) is required as a cofactor.

The protein resides in the cytoplasm. It catalyses the reaction 2 D-alanine + ATP = D-alanyl-D-alanine + ADP + phosphate + H(+). The protein operates within cell wall biogenesis; peptidoglycan biosynthesis. Its function is as follows. Cell wall formation. This chain is D-alanine--D-alanine ligase, found in Anaeromyxobacter dehalogenans (strain 2CP-1 / ATCC BAA-258).